The following is a 111-amino-acid chain: Shuttling pre-60S factor C23B6.02c (111 aa).

Basic residues-rich tracts occupy residues 1–12 and 59–73; these read MAKKQSIRSRNF and SKKKKNKKQTSKKAK. Disordered regions lie at residues 1–25 and 47–111; these read MAKKQSIRSRNFRRSDPAYDLDSST and ALRS…QGDE. The segment covering 83-111 has biased composition (basic and acidic residues); sequence QAREERLDTKISKSLQKQEKLKARKQGDE.

It belongs to the ECM1 family. As to quaternary structure, associates with the pre-60S ribosomal particle and the nucleopore complex.

Its subcellular location is the nucleus. It localises to the nucleolus. The protein localises to the cytoplasm. Functionally, pre-ribosomal factor involved in 60S ribosomal protein subunit export from the nucleus. This is Shuttling pre-60S factor C23B6.02c from Schizosaccharomyces pombe (strain 972 / ATCC 24843) (Fission yeast).